The chain runs to 136 residues: Small ribosomal subunit protein eS6 (136 aa).

It belongs to the eukaryotic ribosomal protein eS6 family.

This is Small ribosomal subunit protein eS6 from Methanosarcina acetivorans (strain ATCC 35395 / DSM 2834 / JCM 12185 / C2A).